A 162-amino-acid polypeptide reads, in one-letter code: MQFTIASLIATAVLGLQMASAAPHAPGSSNAAIISQAQEQNTCGNAHLSCCESTDNSVSLTQEEEEGLLHLLGGTSSVLSDGLLGKYSGCSSLASVEGILGAGGNQGLVSGQCNNHVACCDAGDNELVGFLEPGVAVLKPNSDGIQNGLANVAVPCVPVQVL.

The signal sequence occupies residues 1–21 (MQFTIASLIATAVLGLQMASA). 4 disulfides stabilise this stretch: C43/C119, C50/C113, C51/C90, and C120/C156.

The protein belongs to the fungal hydrophobin family. As to quaternary structure, self-assembles to form functional amyloid fibrils called rodlets. Self-assembly into fibrillar rodlets occurs spontaneously at hydrophobic:hydrophilic interfaces and the rodlets further associate laterally to form amphipathic monolayers.

Its subcellular location is the secreted. It localises to the spore wall. Functionally, aerial growth, conidiation, and dispersal of filamentous fungi in the environment rely upon a capability of their secreting small amphipathic proteins called hydrophobins (HPBs) with low sequence identity. Class I can self-assemble into an outermost layer of rodlet bundles on aerial cell surfaces, conferring cellular hydrophobicity that supports fungal growth, development and dispersal; whereas Class II form highly ordered films at water-air interfaces through intermolecular interactions but contribute nothing to the rodlet structure. DewC is a class I hydrophobin that contributes to the hydrophobicity of the spore surface. This Emericella nidulans (strain FGSC A4 / ATCC 38163 / CBS 112.46 / NRRL 194 / M139) (Aspergillus nidulans) protein is Class I hydrophobin dewC.